Here is a 153-residue protein sequence, read N- to C-terminus: Deoxyuridine 5'-triphosphate nucleotidohydrolase (153 aa).

Residues 71 to 73, Asn-84, 88 to 90, and Lys-98 each bind substrate; these read RSG and TID.

Belongs to the dUTPase family. Mg(2+) is required as a cofactor.

It carries out the reaction dUTP + H2O = dUMP + diphosphate + H(+). The protein operates within pyrimidine metabolism; dUMP biosynthesis; dUMP from dCTP (dUTP route): step 2/2. Its function is as follows. This enzyme is involved in nucleotide metabolism: it produces dUMP, the immediate precursor of thymidine nucleotides and it decreases the intracellular concentration of dUTP so that uracil cannot be incorporated into DNA. In Wolbachia pipientis subsp. Culex pipiens (strain wPip), this protein is Deoxyuridine 5'-triphosphate nucleotidohydrolase.